Here is a 194-residue protein sequence, read N- to C-terminus: MAASHTLWMGLVLLGVLGVLQTRAQAQPSLQPNFQQDKFLGRWFTSGLASNSSWFREKKKVLSMCTSVVAPTADGGFNLTSTFLRKDQCETRTLLLQPAGPPGCYSYTSPHWGMVHEVSVVETDYEEYALLYTHAESTKGLGGQDFRMATLYSRVQSPRPEVKEKFSTFAKAQGFTEDAIVFLPQTDKCMEEHN.

The N-terminal stretch at 1-24 (MAASHTLWMGLVLLGVLGVLQTRA) is a signal peptide. Residue Q25 is modified to Pyrrolidone carboxylic acid. N-linked (GlcNAc...) asparagine glycosylation occurs at N51. C65 serves as the catalytic Nucleophile. Residue N78 is glycosylated (N-linked (GlcNAc...) asparagine). Cysteines 89 and 189 form a disulfide.

It belongs to the calycin superfamily. Lipocalin family. Monomer. In terms of tissue distribution, in the male reproductive system, it is expressed in the testis and epididymis, and is secreted into the seminal fluid.

The protein resides in the rough endoplasmic reticulum. It is found in the nucleus membrane. The protein localises to the golgi apparatus. It localises to the cytoplasm. Its subcellular location is the perinuclear region. The protein resides in the secreted. It carries out the reaction prostaglandin H2 = prostaglandin D2. Catalyzes the conversion of PGH2 to PGD2, a prostaglandin involved in smooth muscle contraction/relaxation and a potent inhibitor of platelet aggregation. Involved in a variety of CNS functions, such as sedation, NREM sleep and PGE2-induced allodynia, and may have an anti-apoptotic role in oligodendrocytes. Binds small non-substrate lipophilic molecules, including biliverdin, bilirubin, retinal, retinoic acid and thyroid hormone, and may act as a scavenger for harmful hydrophobic molecules and as a secretory retinoid and thyroid hormone transporter. Possibly involved in development and maintenance of the blood-brain, blood-retina, blood-aqueous humor and blood-testis barrier. It is likely to play important roles in both maturation and maintenance of the central nervous system and male reproductive system. Involved in PLA2G3-dependent maturation of mast cells. PLA2G3 is secreted by immature mast cells and acts on nearby fibroblasts upstream to PTDGS to synthesize PGD2, which in turn promotes mast cell maturation and degranulation via PTGDR. This is Prostaglandin-H2 D-isomerase (PTGDS) from Equus caballus (Horse).